We begin with the raw amino-acid sequence, 248 residues long: 3-deoxy-manno-octulosonate cytidylyltransferase (248 aa).

The protein belongs to the KdsB family. Requires Mg(2+) as cofactor.

It localises to the cytoplasm. The catalysed reaction is 3-deoxy-alpha-D-manno-oct-2-ulosonate + CTP = CMP-3-deoxy-beta-D-manno-octulosonate + diphosphate. It functions in the pathway nucleotide-sugar biosynthesis; CMP-3-deoxy-D-manno-octulosonate biosynthesis; CMP-3-deoxy-D-manno-octulosonate from 3-deoxy-D-manno-octulosonate and CTP: step 1/1. It participates in bacterial outer membrane biogenesis; lipopolysaccharide biosynthesis. Functionally, activates KDO (a required 8-carbon sugar) for incorporation into bacterial lipopolysaccharide in Gram-negative bacteria. This is 3-deoxy-manno-octulosonate cytidylyltransferase from Escherichia coli O157:H7.